We begin with the raw amino-acid sequence, 403 residues long: Phosphoglycerate kinase (403 aa).

Residues 24 to 26, Arg-39, 62 to 65, Arg-121, and Arg-161 each bind substrate; these read DLN and HLGR. Residues Lys-211, Gly-299, Glu-330, and 359–362 each bind ATP; that span reads GGDS.

Belongs to the phosphoglycerate kinase family. Monomer.

The protein localises to the cytoplasm. It catalyses the reaction (2R)-3-phosphoglycerate + ATP = (2R)-3-phospho-glyceroyl phosphate + ADP. The protein operates within carbohydrate degradation; glycolysis; pyruvate from D-glyceraldehyde 3-phosphate: step 2/5. In Corynebacterium jeikeium (strain K411), this protein is Phosphoglycerate kinase.